We begin with the raw amino-acid sequence, 179 residues long: tRNA (cytidine(56)-2'-O)-methyltransferase (179 aa).

S-adenosyl-L-methionine contacts are provided by residues L82, 112–116 (GAEKV), and 130–137 (VGNQPHSE).

The protein belongs to the aTrm56 family. Homodimer.

It is found in the cytoplasm. The catalysed reaction is cytidine(56) in tRNA + S-adenosyl-L-methionine = 2'-O-methylcytidine(56) in tRNA + S-adenosyl-L-homocysteine + H(+). Functionally, specifically catalyzes the AdoMet-dependent 2'-O-ribose methylation of cytidine at position 56 in tRNAs. The protein is tRNA (cytidine(56)-2'-O)-methyltransferase of Methanococcus maripaludis (strain C7 / ATCC BAA-1331).